The following is a 223-amino-acid chain: Ribosomal RNA small subunit methyltransferase G (223 aa).

Positions 85, 90, and 154 each coordinate S-adenosyl-L-methionine.

Belongs to the methyltransferase superfamily. RNA methyltransferase RsmG family.

Its subcellular location is the cytoplasm. It catalyses the reaction guanosine(527) in 16S rRNA + S-adenosyl-L-methionine = N(7)-methylguanosine(527) in 16S rRNA + S-adenosyl-L-homocysteine. Specifically methylates the N7 position of guanine in position 527 of 16S rRNA. The protein is Ribosomal RNA small subunit methyltransferase G of Rhodopseudomonas palustris (strain ATCC BAA-98 / CGA009).